Here is a 360-residue protein sequence, read N- to C-terminus: Phospho-N-acetylmuramoyl-pentapeptide-transferase (360 aa).

Transmembrane regions (helical) follow at residues 26-46, 74-94, 97-117, 134-154, 168-188, 199-219, 236-256, 263-283, 288-308, and 338-358; these read AILG…KLIE, MGGL…GDLG, YVWV…IDDY, YILQ…TAAN, VMPQ…VGSS, GLAI…AYLS, SGEL…FLWF, VFMG…IAVL, ILLV…ILQV, and VIVR…ATLK.

This sequence belongs to the glycosyltransferase 4 family. MraY subfamily. Requires Mg(2+) as cofactor.

It is found in the cell inner membrane. It catalyses the reaction UDP-N-acetyl-alpha-D-muramoyl-L-alanyl-gamma-D-glutamyl-meso-2,6-diaminopimeloyl-D-alanyl-D-alanine + di-trans,octa-cis-undecaprenyl phosphate = di-trans,octa-cis-undecaprenyl diphospho-N-acetyl-alpha-D-muramoyl-L-alanyl-D-glutamyl-meso-2,6-diaminopimeloyl-D-alanyl-D-alanine + UMP. It participates in cell wall biogenesis; peptidoglycan biosynthesis. Functionally, catalyzes the initial step of the lipid cycle reactions in the biosynthesis of the cell wall peptidoglycan: transfers peptidoglycan precursor phospho-MurNAc-pentapeptide from UDP-MurNAc-pentapeptide onto the lipid carrier undecaprenyl phosphate, yielding undecaprenyl-pyrophosphoryl-MurNAc-pentapeptide, known as lipid I. This chain is Phospho-N-acetylmuramoyl-pentapeptide-transferase, found in Shewanella baltica (strain OS195).